Consider the following 292-residue polypeptide: Zinc finger protein OZF (292 aa).

10 consecutive C2H2-type zinc fingers follow at residues 16–38, 44–66, 72–94, 100–122, 128–150, 156–178, 184–206, 212–234, 240–262, and 268–290; these read FACK…EHFH, FECN…QSTH, FECS…QKIH, FECK…QRTH, FICK…EKIH, FKCN…QNIH, YECN…VRIH, YECN…VRSH, YGCN…LRIH, and YQCS…QKIH. Residues Lys28, Lys51, and Lys56 each participate in a glycyl lysine isopeptide (Lys-Gly) (interchain with G-Cter in SUMO2) cross-link. Residues Lys157 and Lys169 each participate in a glycyl lysine isopeptide (Lys-Gly) (interchain with G-Cter in SUMO) cross-link. Lys173 is covalently cross-linked (Glycyl lysine isopeptide (Lys-Gly) (interchain with G-Cter in SUMO2)). Residues 212-292 are interaction with TERF2IP; the sequence is YECNVCGKAF…HIRHQKIHTH (81 aa).

The protein belongs to the krueppel C2H2-type zinc-finger protein family. Binds DNA. Interacts with SUMO conjugating enzyme UBC9/UBE2I. Interacts with the telomeric protein TERF2IP. As to expression, expressed in heart, brain, liver, lung, skeletal muscle and kidney, and at much lower level in spleen and testicle. Expressed in lactating mammary gland.

The protein localises to the nucleus. This Mus musculus (Mouse) protein is Zinc finger protein OZF (Znf146).